The primary structure comprises 27 residues: M-ectatotoxin-Eb2a (27 aa).

In terms of tissue distribution, expressed by the venom gland.

The protein localises to the secreted. Antimicrobial peptide forming an alpha-helix in watery and membraneous environments, enabling it to perforate membranes. Active against Gram-negative bacteria E.coli DH5alpha (MIC=5 uM), E.coli MH1 (MIC=0.6 uM) and P.aeruginosa PAO1 (MIC=10 uM) and against Gram-positive bacteria B.subtilis VKM B-501 (MIC=0.6 uM) and A.globiformis VKM Ac-1112 (MIC=0.2 uM). Has cytolytic and hemolytic activity. The protein is M-ectatotoxin-Eb2a of Ectatomma brunneum (Ant).